The sequence spans 287 residues: GTPase Era (287 aa).

In terms of domain architecture, Era-type G spans 6–178; the sequence is FSGTSVIIGK…IQNKLKIVPK (173 aa). The interval 14–21 is G1; the sequence is GKPNVGKS. Residue 14–21 coordinates GTP; sequence GKPNVGKS. Residues 40–44 form a G2 region; the sequence is HTTQS. The interval 62-65 is G3; sequence DTPG. GTP contacts are provided by residues 62–66 and 124–127; these read DTPGI and NKID. A G4 region spans residues 124–127; sequence NKID. Residues 154–156 form a G5 region; the sequence is ISG. Positions 207-282 constitute a KH type-2 domain; sequence LGDELPYSIQ…SIYLSLKVIK (76 aa).

The protein belongs to the TRAFAC class TrmE-Era-EngA-EngB-Septin-like GTPase superfamily. Era GTPase family. As to quaternary structure, monomer.

Its subcellular location is the cytoplasm. It localises to the cell membrane. An essential GTPase that binds both GDP and GTP, with rapid nucleotide exchange. Plays a role in 16S rRNA processing and 30S ribosomal subunit biogenesis and possibly also in cell cycle regulation and energy metabolism. The sequence is that of GTPase Era from Buchnera aphidicola subsp. Baizongia pistaciae (strain Bp).